A 253-amino-acid polypeptide reads, in one-letter code: Ubiquinone biosynthesis O-methyltransferase (253 aa).

Residues arginine 41, glycine 72, aspartate 93, and methionine 136 each coordinate S-adenosyl-L-methionine.

The protein belongs to the methyltransferase superfamily. UbiG/COQ3 family.

The catalysed reaction is a 3-demethylubiquinol + S-adenosyl-L-methionine = a ubiquinol + S-adenosyl-L-homocysteine + H(+). It catalyses the reaction a 3-(all-trans-polyprenyl)benzene-1,2-diol + S-adenosyl-L-methionine = a 2-methoxy-6-(all-trans-polyprenyl)phenol + S-adenosyl-L-homocysteine + H(+). It functions in the pathway cofactor biosynthesis; ubiquinone biosynthesis. O-methyltransferase that catalyzes the 2 O-methylation steps in the ubiquinone biosynthetic pathway. The polypeptide is Ubiquinone biosynthesis O-methyltransferase (Chelativorans sp. (strain BNC1)).